Reading from the N-terminus, the 68-residue chain is Antimicrobial peptide Eval655 (68 aa).

The first 23 residues, 1 to 23, serve as a signal peptide directing secretion; sequence MKTQFVVLLVALVLLQMFAQSEA. Leu-36 bears the Leucine amide mark. A propeptide spanning residues 37–68 is cleaved from the precursor; sequence GKRGLKNLDDFDDIFDDDLSSADLEFLKQLMR.

The protein belongs to the non-disulfide-bridged peptide (NDBP) superfamily. Short antimicrobial peptide (group 4) family. As to expression, expressed by the venom gland.

It localises to the secreted. Its function is as follows. Probable antimicrobial peptide. Shows low inhibitory activity against herpes simplex virus type 1 (HSV-1). This chain is Antimicrobial peptide Eval655, found in Euscorpiops validus (Scorpion).